We begin with the raw amino-acid sequence, 366 residues long: Galactoside alpha-(1,2)-fucosyltransferase 1 (366 aa).

The Cytoplasmic portion of the chain corresponds to 1–8 (MWPLSHRH). A helical; Signal-anchor for type II membrane protein transmembrane segment spans residues 9-25 (LCLAFLLVCVLSAISFF). At 26–366 (LHIHQDSFPH…LSPLWTLAEP (341 aa)) the chain is on the lumenal side. Residues asparagine 66, asparagine 302, and asparagine 328 are each glycosylated (N-linked (GlcNAc...) asparagine).

The protein belongs to the glycosyltransferase 11 family.

It is found in the golgi apparatus. The protein resides in the golgi stack membrane. The catalysed reaction is a beta-D-galactosyl-(1-&gt;4)-N-acetyl-beta-D-glucosaminyl derivative + GDP-beta-L-fucose = an alpha-L-Fuc-(1-&gt;2)-beta-D-Gal-(1-&gt;4)-beta-D-GlcNAc derivative + GDP + H(+). It catalyses the reaction a ganglioside GA1 + GDP-beta-L-fucose = a ganglioside Fuc-GA1 + GDP + H(+). The enzyme catalyses a beta-D-Gal-(1-&gt;3)-beta-D-GlcNAc-(1-&gt;3)-beta-D-Gal-(1-&gt;4)-beta-D-Glc-(1&lt;-&gt;1')-Cer(d18:1(4E)) + GDP-beta-L-fucose = alpha-L-fucosyl-(1-&gt;2)- beta-D-galactosyl-(1-&gt;3)-N-acetyl-beta-D-glucosaminyl-(1-&gt;3)-beta-D-galactosyl-(1-&gt;4)-beta-D-glucosyl-(1&lt;-&gt;1')-N-acylsphing-4-enine + GDP + H(+). It carries out the reaction a neolactoside nLc4Cer(d18:1(4E)) + GDP-beta-L-fucose = a neolactoside IV(2)-alpha-Fuc-nLc4Cer(d18:1(4E)) + GDP + H(+). The catalysed reaction is a ganglioside GM1 + GDP-beta-L-fucose = a ganglioside Fuc-GM1 + GDP + H(+). It catalyses the reaction beta-D-galactosyl-(1-&gt;3)-N-acetyl-D-galactosamine + GDP-beta-L-fucose = alpha-L-fucosyl-(1-&gt;2)-beta-D-galactosyl-(1-&gt;3)-N-acetyl-D-galactosamine + GDP + H(+). The protein operates within protein modification; protein glycosylation. In terms of biological role, catalyzes the transfer of L-fucose, from a guanosine diphosphate-beta-L-fucose, to the terminal galactose residue of glycoconjugates through an alpha(1,2) linkage leading to H antigen synthesis that is an intermediate substrate in the synthesis of ABO blood group antigens. H antigen is essential for maturation of the glomerular layer of the main olfactory bulb, in cell migration and early cell-cell contacts during tumor associated angiogenesis. Preferentially fucosylates soluble lactose and to a lesser extent fucosylates glycolipids gangliosides GA1 and GM1a. In Lagothrix lagotricha (Brown woolly monkey), this protein is Galactoside alpha-(1,2)-fucosyltransferase 1.